A 370-amino-acid polypeptide reads, in one-letter code: Seipin (370 aa).

The N-terminal stretch at 1-18 (MNILLRLIVFALDPLGLG) is a signal peptide. Residues 19 to 55 (RRFLIRPAVNLGWNVYDRVRSKADEKVGTVRELVLRL) lie on the Cytoplasmic side of the membrane. A helical transmembrane segment spans residues 56–76 (GLIAFAVVLIIWLAVFMYAAF). Residues 77 to 251 (YYVYMPAISH…GLRYIMFNWP (175 aa)) are Lumenal-facing. The helical transmembrane segment at 252 to 272 (VLSAIVAISTNLFFILVVFLL) threads the bilayer. Over 273–370 (SWYHWSDAKW…RPTKKTTADH (98 aa)) the chain is Cytoplasmic. The tract at residues 346-370 (KSRSGKRESPDALRKRPTKKTTADH) is disordered. The segment covering 350–359 (GKRESPDALR) has biased composition (basic and acidic residues).

In terms of tissue distribution, widely expressed, with highest levels detected in fat body, moderate levels detected in salivary gland, midgut and muscle, and weak expression detected in brain.

Its subcellular location is the endoplasmic reticulum membrane. The protein resides in the lipid droplet. Its function is as follows. Acts as a tissue-autonomous lipid modulator, preventing ectopic lipid accumulation in salivary gland (a non-adipose tissue) and in promoting lipid storage in fat tissue. Required for the growth and maturation of small nascent lipid droplets (LDs) into larger mature LDs. The sequence is that of Seipin from Drosophila melanogaster (Fruit fly).